Reading from the N-terminus, the 124-residue chain is Sulfiredoxin (124 aa).

The protein belongs to the sulfiredoxin family. In terms of assembly, interacts with tpx1 in response to oxidative stress.

The protein localises to the cytoplasm. It is found in the nucleus. It catalyses the reaction S-hydroxy-S-oxy-L-cysteinyl-[peroxiredoxin] + [protein]-dithiol + ATP = S-hydroxy-L-cysteinyl-[peroxiredoxin] + [protein]-disulfide + ADP + phosphate. Its function is as follows. Contributes to oxidative stress resistance by reducing cysteine-sulfinic acid formed under exposure to oxidants in a peroxiredoxin. May catalyze the reduction in a multi-step process by acting both as a specific phosphotransferase and a thioltransferase. This is Sulfiredoxin (srx1) from Schizosaccharomyces pombe (strain 972 / ATCC 24843) (Fission yeast).